A 175-amino-acid polypeptide reads, in one-letter code: Sialidase 85-1.3 (175 aa).

Belongs to the glycosyl hydrolase 33 family.

It carries out the reaction Hydrolysis of alpha-(2-&gt;3)-, alpha-(2-&gt;6)-, alpha-(2-&gt;8)- glycosidic linkages of terminal sialic acid residues in oligosaccharides, glycoproteins, glycolipids, colominic acid and synthetic substrates.. Developmentally regulated neuraminidase implicated in parasite invasion of cells. May contribute to the pathology during T.cruzi infection by cleaving sialic acid from cells of the immune system. The sequence is that of Sialidase 85-1.3 (SA85-1.3) from Trypanosoma cruzi.